The chain runs to 125 residues: uncharacterized protein (125 aa).

A disordered region spans residues 36–57 (EAKKAKEKQDSKTKDTDKKVDQ). Residues 92–112 (ITIFLLIVLVSAIMIGIYFGI) traverse the membrane as a helical segment.

The protein resides in the membrane. This is an uncharacterized protein from Mycoplasma pneumoniae (strain ATCC 29342 / M129 / Subtype 1) (Mycoplasmoides pneumoniae).